We begin with the raw amino-acid sequence, 378 residues long: Succinyl-diaminopimelate desuccinylase (378 aa).

His67 is a Zn(2+) binding site. Asp69 is an active-site residue. Zn(2+) is bound at residue Asp100. The active-site Proton acceptor is Glu134. Residues Glu135, Glu163, and His349 each coordinate Zn(2+).

This sequence belongs to the peptidase M20A family. DapE subfamily. As to quaternary structure, homodimer. The cofactor is Zn(2+). Co(2+) is required as a cofactor.

It carries out the reaction N-succinyl-(2S,6S)-2,6-diaminopimelate + H2O = (2S,6S)-2,6-diaminopimelate + succinate. It participates in amino-acid biosynthesis; L-lysine biosynthesis via DAP pathway; LL-2,6-diaminopimelate from (S)-tetrahydrodipicolinate (succinylase route): step 3/3. Catalyzes the hydrolysis of N-succinyl-L,L-diaminopimelic acid (SDAP), forming succinate and LL-2,6-diaminopimelate (DAP), an intermediate involved in the bacterial biosynthesis of lysine and meso-diaminopimelic acid, an essential component of bacterial cell walls. The chain is Succinyl-diaminopimelate desuccinylase from Nitrosospira multiformis (strain ATCC 25196 / NCIMB 11849 / C 71).